We begin with the raw amino-acid sequence, 448 residues long: uncharacterized protein (448 aa).

A run of 12 helical transmembrane segments spans residues 14-34 (PFII…YGII), 59-79 (TLLA…GFLA), 87-107 (VPML…TFGN), 120-140 (GLSA…VVGA), 148-168 (GGIF…GGIV), 171-191 (SLGY…DIAL), 250-270 (IFGP…FDAT), 288-308 (LMFG…GAMV), 316-333 (IGKR…LLCI), 338-358 (TSLN…VLAF), 392-412 (FSAY…VAGF), and 417-437 (FNFI…SLMA).

It belongs to the major facilitator superfamily. TCR/Tet family.

The protein localises to the endoplasmic reticulum. Its subcellular location is the membrane. This is an uncharacterized protein from Schizosaccharomyces pombe (strain 972 / ATCC 24843) (Fission yeast).